The primary structure comprises 292 residues: Protease HtpX homolog (292 aa).

2 consecutive transmembrane segments (helical) span residues 4 to 24 (ILLF…VASL) and 39 to 59 (GALL…SLLI). His144 provides a ligand contact to Zn(2+). Glu145 is an active-site residue. Position 148 (His148) interacts with Zn(2+). 2 consecutive transmembrane segments (helical) span residues 159 to 179 (LIQG…GYAV) and 199 to 219 (VTTI…VAWF). Glu224 contributes to the Zn(2+) binding site.

Belongs to the peptidase M48B family. Zn(2+) is required as a cofactor.

The protein resides in the cell inner membrane. The sequence is that of Protease HtpX homolog from Verminephrobacter eiseniae (strain EF01-2).